We begin with the raw amino-acid sequence, 576 residues long: Putative export ATP-binding/permease protein RC1073 (576 aa).

The ABC transmembrane type-1 domain maps to 20 to 303 (LIIVMISLLS…IFELLSEMHL (284 aa)). 6 consecutive transmembrane segments (helical) span residues 21–41 (IIVMISLLSVSASLLLIGSVF), 57–77 (VDNSILYICLLIIILSIASFF), 135–155 (FLSFFIRNSVMLIGSITLMFF), 158–178 (FKLASIVIITIPILLIPLIKF), 242–262 (ALFFAISIAVIFLAITLVVWI), and 277–297 (IISFIYYAIIAGVSCGGIFEL). The ABC transporter domain maps to 336–572 (IEFKNVDFTY…SEIYRNICRE (237 aa)). An ATP-binding site is contributed by 371–378 (GRSGAGKS).

The protein belongs to the ABC transporter superfamily. As to quaternary structure, homodimer.

The protein localises to the cell inner membrane. Functionally, part of an ABC transporter complex. Transmembrane domains (TMD) form a pore in the inner membrane and the ATP-binding domain (NBD) is responsible for energy generation. The protein is Putative export ATP-binding/permease protein RC1073 of Rickettsia conorii (strain ATCC VR-613 / Malish 7).